Reading from the N-terminus, the 154-residue chain is Deoxyuridine 5'-triphosphate nucleotidohydrolase (154 aa).

Substrate-binding positions include 64–66, N77, 81–83, and K91; these read RSG and TVD.

The protein belongs to the dUTPase family. In terms of assembly, homotrimer. It depends on Mg(2+) as a cofactor.

The catalysed reaction is dUTP + H2O = dUMP + diphosphate + H(+). It functions in the pathway pyrimidine metabolism; dUMP biosynthesis; dUMP from dCTP (dUTP route): step 2/2. Its function is as follows. This enzyme is involved in nucleotide metabolism: it produces dUMP, the immediate precursor of thymidine nucleotides and it decreases the intracellular concentration of dUTP so that uracil cannot be incorporated into DNA. This Mycolicibacterium gilvum (strain PYR-GCK) (Mycobacterium gilvum (strain PYR-GCK)) protein is Deoxyuridine 5'-triphosphate nucleotidohydrolase.